We begin with the raw amino-acid sequence, 393 residues long: Formate-dependent phosphoribosylglycinamide formyltransferase (393 aa).

N(1)-(5-phospho-beta-D-ribosyl)glycinamide contacts are provided by residues 22-23 (EL) and Glu82. Residues Arg114, Lys155, 160–165 (SSGHGQ), 195–198 (EGFV), and Glu203 contribute to the ATP site. The ATP-grasp domain maps to 119–308 (RLAAEKLKLP…EFALHARAIL (190 aa)). Positions 267 and 279 each coordinate Mg(2+). Residues Asp286, Lys356, and 363 to 364 (RR) each bind N(1)-(5-phospho-beta-D-ribosyl)glycinamide.

The protein belongs to the PurK/PurT family. As to quaternary structure, homodimer.

The enzyme catalyses N(1)-(5-phospho-beta-D-ribosyl)glycinamide + formate + ATP = N(2)-formyl-N(1)-(5-phospho-beta-D-ribosyl)glycinamide + ADP + phosphate + H(+). The protein operates within purine metabolism; IMP biosynthesis via de novo pathway; N(2)-formyl-N(1)-(5-phospho-D-ribosyl)glycinamide from N(1)-(5-phospho-D-ribosyl)glycinamide (formate route): step 1/1. Functionally, involved in the de novo purine biosynthesis. Catalyzes the transfer of formate to 5-phospho-ribosyl-glycinamide (GAR), producing 5-phospho-ribosyl-N-formylglycinamide (FGAR). Formate is provided by PurU via hydrolysis of 10-formyl-tetrahydrofolate. In Histophilus somni (strain 129Pt) (Haemophilus somnus), this protein is Formate-dependent phosphoribosylglycinamide formyltransferase.